We begin with the raw amino-acid sequence, 202 residues long: Na(+)-translocating NADH-quinone reductase subunit E (202 aa).

A run of 6 helical transmembrane segments spans residues 11 to 31 (SVFI…FLAM), 35 to 55 (INAA…TVPA), 81 to 101 (FLSF…MEMV), 114 to 134 (GVFL…LFMV), 144 to 164 (VVYG…LAGI), and 180 to 200 (LGIT…FGGI).

The protein belongs to the NqrDE/RnfAE family. Composed of six subunits; NqrA, NqrB, NqrC, NqrD, NqrE and NqrF.

It is found in the cell inner membrane. The catalysed reaction is a ubiquinone + n Na(+)(in) + NADH + H(+) = a ubiquinol + n Na(+)(out) + NAD(+). Functionally, NQR complex catalyzes the reduction of ubiquinone-1 to ubiquinol by two successive reactions, coupled with the transport of Na(+) ions from the cytoplasm to the periplasm. NqrA to NqrE are probably involved in the second step, the conversion of ubisemiquinone to ubiquinol. The sequence is that of Na(+)-translocating NADH-quinone reductase subunit E from Cellvibrio japonicus (strain Ueda107) (Pseudomonas fluorescens subsp. cellulosa).